The primary structure comprises 137 residues: Cellular retinoic acid-binding protein 1 (137 aa).

The Nuclear localization signal motif lies at 21–31; it reads KALGVNAMLRK. Position 132–134 (132–134) interacts with all-trans-retinoate; sequence RIY.

It belongs to the calycin superfamily. Fatty-acid binding protein (FABP) family.

It localises to the cytoplasm. In terms of biological role, cytosolic CRABPs may regulate the access of retinoic acid to the nuclear retinoic acid receptors. In Gallus gallus (Chicken), this protein is Cellular retinoic acid-binding protein 1 (CRABP1).